Consider the following 30-residue polypeptide: Babycurus-toxin 1 (30 aa).

The LCN-type CS-alpha/beta domain maps to Lys2–Gln30.

Belongs to the long (4 C-C) scorpion toxin superfamily. Sodium channel inhibitor family. As to expression, expressed by the venom gland.

The protein localises to the secreted. Its function is as follows. Binds to sodium channels (Nav) and inhibits both the activation and inactivation of the activated channels, thereby blocking neuronal transmission. This Babycurus centrurimorphus (East African scorpion) protein is Babycurus-toxin 1.